The primary structure comprises 799 residues: MANILKKLYNTDKRELKKFEKYATKVEEHADEMSKLSDEQLQAKTPEFRERIKNGESLDDLLPEAFAVAREGAKRVLGLYPFHVQILGGIALHFGNIAEMMTGEGKTLTATMPVYLNALEGKGVHVVTVNEYLSSRDEEEMGQLYRWLGLTVGLNINSMSPDEKREAYNCDVTYSTNSELGFDYLRDNMVVYKEQMVQRPLNYAIIDEVDSILIDEARTPLIISGEAEQANSDYIRADRFVKTLTEDKSDDDADDDEDHGDYKIDWPTKTISLTRTGIEKACEHFGLKNLYDVENQKLVHHIDQALRANYIMLKDIDYVVQDGEVLIVDSFTGRVMEGRRYSDGLHQAIEAKEGVKIQEESRTQATITYQNFFRMYKKLSGMTGTGKTEEEEFREIYNMQVITIPTNRPIARKDMPDILYPTLDSKFHAVIEEIKKRHAKGQPVLVGTVAIESSERLSHLLDEANIPHAVLNAKNHAKEAQIIMNAGQRGAVTIATNMAGRGTDIKLGPGVKELGGLAVIGTERHESRRIDNQLRGRSGRQGDPGYTRFYLSLEDDLMKRFGGDRVKDFLDRLSDNDDEKVIESRLITRQVESAQKRVEGNNYDTRKQTLQYDDVMRIQREIIYGERMQVIEADKSLKNVLIPMIHRTINSQVDMFTQGDRSQWRLDSLRDFISSSLASEQVTDSIDFKTISVEDLKKKLYDIVEKNFEDKEKALGDPSQMLEFEKVVILRVVDDRWTDHIDAMDQLRQSIGLRGYGQLNPLVEYQDSGYRMFEEMISNIEFDVTRLFMKAEIRQNLSR.

Residues Gln-85, 103 to 107 (GEGKT), and Asp-504 contribute to the ATP site.

It belongs to the SecA family. As to quaternary structure, monomer and homodimer. Part of the essential Sec protein translocation apparatus which comprises SecA, SecYEG and auxiliary proteins SecDF. Other proteins may also be involved.

It is found in the cell membrane. Its subcellular location is the cytoplasm. It carries out the reaction ATP + H2O + cellular proteinSide 1 = ADP + phosphate + cellular proteinSide 2.. Part of the Sec protein translocase complex. Interacts with the SecYEG preprotein conducting channel. Has a central role in coupling the hydrolysis of ATP to the transfer of proteins into and across the cell membrane, serving as an ATP-driven molecular motor driving the stepwise translocation of polypeptide chains across the membrane. This chain is Protein translocase subunit SecA, found in Lactobacillus acidophilus (strain ATCC 700396 / NCK56 / N2 / NCFM).